The chain runs to 409 residues: Broad specificity amino-acid racemase (409 aa).

The N-terminal stretch at 1–25 is a signal peptide; it reads MRLKKTLLSIAIAAATFTPAMHSIA. A disulfide bridge connects residues C72 and C98. The active-site Proton acceptor is the K76. K76 is subject to N6-(pyridoxal phosphate)lysine. R175 is a binding site for substrate. The active-site Proton acceptor is the Y301. Residue M349 coordinates substrate.

Belongs to the alanine racemase family. Bsr subfamily. Requires pyridoxal 5'-phosphate as cofactor.

It localises to the periplasm. It catalyses the reaction an L-alpha-amino acid = a D-alpha-amino acid. It carries out the reaction L-lysine = D-lysine. The enzyme catalyses L-arginine = D-arginine. In terms of biological role, amino-acid racemase able to utilize a broad range of substrates. The protein is Broad specificity amino-acid racemase of Vibrio parahaemolyticus serotype O3:K6 (strain RIMD 2210633).